A 1106-amino-acid chain; its full sequence is Putative pre-mRNA-splicing factor ATP-dependent RNA helicase DHX16 (1106 aa).

Disordered regions lie at residues 73–100 (KIQNITSSSSSSSSTSLSSSSSSKDKEK), 120–286 (DDIV…TKSR), and 366–394 (YINDNKNKKGNDSSSSSSYNPEQKEWEQN). Residues 78–94 (TSSSSSSSSTSLSSSSS) show a composition bias toward low complexity. Residues 138 to 155 (KRKKKEKKKEKKDKKDKK) are compositionally biased toward basic residues. The segment covering 156-167 (DKKSSTRKKSDN) has biased composition (basic and acidic residues). Over residues 189–201 (NNENNDNNNDNNN) the composition is skewed to low complexity. The segment covering 232 to 283 (REQREVKELSDRIKKRDEKSTKKKIVDDSETKESIERKNRLEQNEQLETERT) has biased composition (basic and acidic residues). The Helicase ATP-binding domain maps to 477–640 (IDAVREYQVL…FDGAPTFNIP (164 aa)). 490 to 497 (GETGSGKT) is an ATP binding site. Residues 587–590 (DEAH) carry the DEAH box motif. Residues 665–838 (TVLQIHITEP…NVVLLLKSMG (174 aa)) form the Helicase C-terminal domain.

Belongs to the DEAD box helicase family. DEAH subfamily. DDX16/PRP8 sub-subfamily. As to quaternary structure, component of pre-catalytic spliceosome complexes.

It localises to the nucleus. The protein localises to the nucleoplasm. The enzyme catalyses ATP + H2O = ADP + phosphate + H(+). Its function is as follows. Required for pre-mRNA splicing as component of the spliceosome. Contributes to pre-mRNA splicing after spliceosome formation and prior to the first transesterification reaction. The sequence is that of Putative pre-mRNA-splicing factor ATP-dependent RNA helicase DHX16 (dhx16) from Dictyostelium discoideum (Social amoeba).